The chain runs to 179 residues: ATP-dependent protease subunit HslV (179 aa).

The active site involves threonine 6. Positions 164, 167, and 170 each coordinate Na(+).

It belongs to the peptidase T1B family. HslV subfamily. A double ring-shaped homohexamer of HslV is capped on each side by a ring-shaped HslU homohexamer. The assembly of the HslU/HslV complex is dependent on binding of ATP.

The protein resides in the cytoplasm. It catalyses the reaction ATP-dependent cleavage of peptide bonds with broad specificity.. Its activity is regulated as follows. Allosterically activated by HslU binding. Functionally, protease subunit of a proteasome-like degradation complex believed to be a general protein degrading machinery. The polypeptide is ATP-dependent protease subunit HslV (Listeria monocytogenes serotype 4b (strain CLIP80459)).